A 153-amino-acid polypeptide reads, in one-letter code: Putative WASP homolog-associated protein with actin, membranes and microtubules-like protein 1 (153 aa).

Positions A113–D151 form a coiled coil.

In Homo sapiens (Human), this protein is Putative WASP homolog-associated protein with actin, membranes and microtubules-like protein 1 (WHAMMP3).